A 69-amino-acid polypeptide reads, in one-letter code: Putative membrane protein insertion efficiency factor (69 aa).

This sequence belongs to the UPF0161 family.

It is found in the cell inner membrane. In terms of biological role, could be involved in insertion of integral membrane proteins into the membrane. In Geobacter sulfurreducens (strain ATCC 51573 / DSM 12127 / PCA), this protein is Putative membrane protein insertion efficiency factor.